The sequence spans 276 residues: Large ribosomal subunit protein uL2 (276 aa).

2 disordered regions span residues 37 to 59 (QFQK…GGHK) and 224 to 276 (VAMN…RHKR). Residues 50–59 (TTRHKGGGHK) are compositionally biased toward basic residues.

This sequence belongs to the universal ribosomal protein uL2 family. As to quaternary structure, part of the 50S ribosomal subunit. Forms a bridge to the 30S subunit in the 70S ribosome.

One of the primary rRNA binding proteins. Required for association of the 30S and 50S subunits to form the 70S ribosome, for tRNA binding and peptide bond formation. It has been suggested to have peptidyltransferase activity; this is somewhat controversial. Makes several contacts with the 16S rRNA in the 70S ribosome. The polypeptide is Large ribosomal subunit protein uL2 (Ralstonia nicotianae (strain ATCC BAA-1114 / GMI1000) (Ralstonia solanacearum)).